A 445-amino-acid polypeptide reads, in one-letter code: Guanosine nucleotide diphosphate dissociation inhibitor 1 (445 aa).

This sequence belongs to the Rab GDI family. Interacts with the GDP-bound form of RABA5C (via C-terminus). As to expression, expressed in roots, rosette leaves, stems, floral buds and siliques.

Regulates the GDP/GTP exchange reaction of most RAB proteins by inhibiting the dissociation of GDP from them, and the subsequent binding of GTP. This Arabidopsis thaliana (Mouse-ear cress) protein is Guanosine nucleotide diphosphate dissociation inhibitor 1 (GDI1).